A 513-amino-acid chain; its full sequence is Putative thymidine phosphorylase (513 aa).

This sequence belongs to the thymidine/pyrimidine-nucleoside phosphorylase family. Type 2 subfamily.

It carries out the reaction thymidine + phosphate = 2-deoxy-alpha-D-ribose 1-phosphate + thymine. The protein is Putative thymidine phosphorylase of Rhodopseudomonas palustris (strain BisA53).